Here is a 244-residue protein sequence, read N- to C-terminus: Proteasome subunit alpha type-5 (244 aa).

It belongs to the peptidase T1A family. The 26S proteasome consists of a 20S proteasome core and two 19S regulatory subunits. The 20S proteasome core is composed of 28 subunits that are arranged in four stacked rings, resulting in a barrel-shaped structure. The two end rings are each formed by seven alpha subunits, and the two central rings are each formed by seven beta subunits. The catalytic chamber with the active sites is on the inside of the barrel.

Its subcellular location is the cytoplasm. It is found in the nucleus. The proteasome is a multicatalytic proteinase complex which is characterized by its ability to cleave peptides with Arg, Phe, Tyr, Leu, and Glu adjacent to the leaving group at neutral or slightly basic pH. The proteasome has an ATP-dependent proteolytic activity. This is Proteasome subunit alpha type-5 (Prosalpha5) from Drosophila melanogaster (Fruit fly).